The following is a 422-amino-acid chain: Histidine--tRNA ligase (422 aa).

This sequence belongs to the class-II aminoacyl-tRNA synthetase family. As to quaternary structure, homodimer.

It is found in the cytoplasm. The enzyme catalyses tRNA(His) + L-histidine + ATP = L-histidyl-tRNA(His) + AMP + diphosphate + H(+). This is Histidine--tRNA ligase from Alcanivorax borkumensis (strain ATCC 700651 / DSM 11573 / NCIMB 13689 / SK2).